The chain runs to 37 residues: MEALVYTFLLVGTLGIIFFAIFFREPPKLPEASKSKK.

A helical membrane pass occupies residues 3-23; the sequence is ALVYTFLLVGTLGIIFFAIFF.

This sequence belongs to the PsbT family. PSII is composed of 1 copy each of membrane proteins PsbA, PsbB, PsbC, PsbD, PsbE, PsbF, PsbH, PsbI, PsbJ, PsbK, PsbL, PsbM, PsbT, PsbY, PsbZ, Psb30/Ycf12, at least 3 peripheral proteins of the oxygen-evolving complex and a large number of cofactors. It forms dimeric complexes.

The protein localises to the plastid. It localises to the chloroplast thylakoid membrane. Its function is as follows. Found at the monomer-monomer interface of the photosystem II (PS II) dimer, plays a role in assembly and dimerization of PSII. PSII is a light-driven water plastoquinone oxidoreductase, using light energy to abstract electrons from H(2)O, generating a proton gradient subsequently used for ATP formation. The chain is Photosystem II reaction center protein T from Spirogyra maxima (Green alga).